The primary structure comprises 200 residues: Putative glucose-6-phosphate isomerase 2 (200 aa).

Fe cation contacts are provided by histidine 92, histidine 94, glutamate 101, and histidine 140.

It belongs to the archaeal-type GPI family. As to quaternary structure, homodimer. Fe cation serves as cofactor.

The protein resides in the cytoplasm. The enzyme catalyses alpha-D-glucose 6-phosphate = beta-D-fructose 6-phosphate. It participates in carbohydrate degradation; glycolysis; D-glyceraldehyde 3-phosphate and glycerone phosphate from D-glucose: step 2/4. In Rhizobium meliloti (strain 1021) (Ensifer meliloti), this protein is Putative glucose-6-phosphate isomerase 2 (pgiA2).